We begin with the raw amino-acid sequence, 242 residues long: Small ribosomal subunit protein uS7m (242 aa).

The transit peptide at 1 to 37 (MAAPALRAPLRWSGLALGVRCAVWNLPGLTQVRGSRY) directs the protein to the mitochondrion. Position 228 is an N6-acetyllysine (K228).

This sequence belongs to the universal ribosomal protein uS7 family. As to quaternary structure, component of the mitochondrial ribosome small subunit (28S) which comprises a 12S rRNA and about 30 distinct proteins.

It is found in the mitochondrion. The sequence is that of Small ribosomal subunit protein uS7m (Mrps7) from Mus musculus (Mouse).